A 283-amino-acid polypeptide reads, in one-letter code: Protein FAM78A (283 aa).

It belongs to the FAM78 family.

The chain is Protein FAM78A (FAM78A) from Homo sapiens (Human).